Consider the following 254-residue polypeptide: tRNA uridine(34) hydroxylase (254 aa).

Residues 123 to 217 (QDPNVILLDT…YLESIPESES (95 aa)) form the Rhodanese domain. The active-site Cysteine persulfide intermediate is the C177.

It belongs to the TrhO family.

It catalyses the reaction uridine(34) in tRNA + AH2 + O2 = 5-hydroxyuridine(34) in tRNA + A + H2O. Catalyzes oxygen-dependent 5-hydroxyuridine (ho5U) modification at position 34 in tRNAs. The sequence is that of tRNA uridine(34) hydroxylase from Legionella pneumophila (strain Paris).